A 518-amino-acid chain; its full sequence is OTU domain-containing protein 5 (518 aa).

Disordered stretches follow at residues 1–79 and 105–144; these read MTIL…SGGA and PGHSKRRRQGVSAGPGAPGSSPDREDGAGNNSEDEYETAA. Over residues 39–53 the composition is skewed to pro residues; it reads SSPPPRWAYPGNPAP. A compositionally biased stretch (low complexity) spans 116–125; it reads SAGPGAPGSS. The 124-residue stretch at 171–294 folds into the OTU domain; the sequence is FIIKQMKEDG…NIHYNSVVNP (124 aa). A cys-loop region spans residues 176 to 182; it reads MKEDGAC. The active site involves Asp179. The active-site Nucleophile is Cys182. A variable-loop region spans residues 231-241; the sequence is KRKNNCHGNHI. The tract at residues 282–287 is his-loop; sequence YHRNIH. His287 is a catalytic residue. Residues 371–450 form a disordered region; sequence ARQPRKASAT…GPSNQTCAGA (80 aa). Over residues 377-390 the composition is skewed to low complexity; it reads ASATCSSATAAASS.

The protein belongs to the peptidase C85 family.

It catalyses the reaction Thiol-dependent hydrolysis of ester, thioester, amide, peptide and isopeptide bonds formed by the C-terminal Gly of ubiquitin (a 76-residue protein attached to proteins as an intracellular targeting signal).. In terms of biological role, deubiquitinating enzyme that may function as negative regulator of the innate immune system. Has peptidase activity towards 'Lys-48'- and 'Lys-63'-linked polyubiquitin chains. Can also cleave 'Lys-11'-linked ubiquitin chains (in vitro). The sequence is that of OTU domain-containing protein 5 (otud5) from Xenopus tropicalis (Western clawed frog).